The primary structure comprises 122 residues: Fluoride-specific ion channel FluC 2 (122 aa).

4 helical membrane passes run 1 to 21 (MAWL…FLLS), 33 to 53 (PLGT…LLAL), 62 to 82 (VTLA…TFTY), and 102 to 122 (GSIL…GSLF). Positions 72 and 75 each coordinate Na(+).

Belongs to the fluoride channel Fluc/FEX (TC 1.A.43) family.

It localises to the cell membrane. It catalyses the reaction fluoride(in) = fluoride(out). With respect to regulation, na(+) is not transported, but it plays an essential structural role and its presence is essential for fluoride channel function. Fluoride-specific ion channel. Important for reducing fluoride concentration in the cell, thus reducing its toxicity. The chain is Fluoride-specific ion channel FluC 2 from Moorella thermoacetica (strain ATCC 39073 / JCM 9320).